The primary structure comprises 253 residues: CENP-A recruiting complex protein mis20 (253 aa).

A disordered region spans residues 113–136 (TGPTTSKNKHPSHSNTIRSPPYKV).

Component of the CENP-A recruiting complex composed of at least mis16, mis19, mis19 and mis20.

The protein resides in the cytoplasm. The protein localises to the cytoskeleton. It is found in the microtubule organizing center. It localises to the spindle pole body. Its subcellular location is the chromosome. The protein resides in the centromere. Functionally, component of the CENP-A recruiting complex that ensures the integrity of mitotic spindles through maintenance of kinetochore factors mis6/CENP-I and cnp1/CENP-A. Seems dispensable for proper chromosome segregation. This is CENP-A recruiting complex protein mis20 from Schizosaccharomyces pombe (strain 972 / ATCC 24843) (Fission yeast).